Reading from the N-terminus, the 197-residue chain is NADH-quinone oxidoreductase subunit C (197 aa).

This sequence belongs to the complex I 30 kDa subunit family. In terms of assembly, NDH-1 is composed of 14 different subunits. Subunits NuoB, C, D, E, F, and G constitute the peripheral sector of the complex.

The protein resides in the cell inner membrane. The enzyme catalyses a quinone + NADH + 5 H(+)(in) = a quinol + NAD(+) + 4 H(+)(out). In terms of biological role, NDH-1 shuttles electrons from NADH, via FMN and iron-sulfur (Fe-S) centers, to quinones in the respiratory chain. The immediate electron acceptor for the enzyme in this species is believed to be ubiquinone. Couples the redox reaction to proton translocation (for every two electrons transferred, four hydrogen ions are translocated across the cytoplasmic membrane), and thus conserves the redox energy in a proton gradient. This Neisseria meningitidis serogroup B (strain ATCC BAA-335 / MC58) protein is NADH-quinone oxidoreductase subunit C.